The following is a 273-amino-acid chain: Putative phosphoenolpyruvate synthase regulatory protein (273 aa).

153 to 160 (AVSRAGKT) serves as a coordination point for ADP.

It belongs to the pyruvate, phosphate/water dikinase regulatory protein family. PSRP subfamily.

The catalysed reaction is [pyruvate, water dikinase] + ADP = [pyruvate, water dikinase]-phosphate + AMP + H(+). It catalyses the reaction [pyruvate, water dikinase]-phosphate + phosphate + H(+) = [pyruvate, water dikinase] + diphosphate. Bifunctional serine/threonine kinase and phosphorylase involved in the regulation of the phosphoenolpyruvate synthase (PEPS) by catalyzing its phosphorylation/dephosphorylation. The protein is Putative phosphoenolpyruvate synthase regulatory protein of Xylella fastidiosa (strain M23).